A 457-amino-acid chain; its full sequence is Phenylalanine-4-hydroxylase (457 aa).

Residues 31 to 108 (TIVFTLREKA…EKKVLVQDWN (78 aa)) form the ACT domain. Positions 285, 290, and 330 each coordinate Fe cation.

The protein belongs to the biopterin-dependent aromatic amino acid hydroxylase family. Homotetramer. The cofactor is Fe(2+). Expressed in the seam cells of the lateral hypodermis, in the ventral hypodermis and in the hyp7 hypodermal syncytium, in hypodermal cells in the tail and in body wall muscle cells (at protein level).

It localises to the cytoplasm. The enzyme catalyses (6R)-L-erythro-5,6,7,8-tetrahydrobiopterin + L-phenylalanine + O2 = (4aS,6R)-4a-hydroxy-L-erythro-5,6,7,8-tetrahydrobiopterin + L-tyrosine. It catalyses the reaction (6R)-L-erythro-5,6,7,8-tetrahydrobiopterin + L-tryptophan + O2 = 5-hydroxy-L-tryptophan + (4aS,6R)-4a-hydroxy-L-erythro-5,6,7,8-tetrahydrobiopterin. It participates in amino-acid degradation; L-phenylalanine degradation; acetoacetate and fumarate from L-phenylalanine: step 1/6. With respect to regulation, inhibited by tetrahydrobiopterin. Unlike its mammalian orthologs, pah-1 does not exhibit allosteric binding behavior for phenylalanine. Its function is as follows. Catalyzes the hydroxylation of L-phenylalanine to L-tyrosine. Catalyzes the hydroxylation of tryptophan to 5-hydroxy-L-tryptophan. Plays a role in the biosynthesis of a melanin-like cuticle pigment. The protein is Phenylalanine-4-hydroxylase of Caenorhabditis elegans.